A 141-amino-acid chain; its full sequence is Envelope glycoprotein L (141 aa).

The first 19 residues, 1-19, serve as a signal peptide directing secretion; that stretch reads MKWLLGAYVCLCLANILNA. Residues 21–131 are interaction with gH; the sequence is IPNPCCNVFA…TSAIKFKSKY (111 aa).

The protein belongs to the herpesviridae glycoprotein L family. As to quaternary structure, interacts with glycoprotein H (gH); this interaction is necessary for the correct processing and cell surface expression of gH. The heterodimer gH/gL seems to interact with gB trimers during fusion.

It localises to the virion membrane. The protein localises to the host cell membrane. Its subcellular location is the host Golgi apparatus. It is found in the host trans-Golgi network. The heterodimer glycoprotein H-glycoprotein L is required for the fusion of viral and plasma membranes leading to virus entry into the host cell. Acts as a functional inhibitor of gH and maintains gH in an inhibited form. Upon binding to host integrins, gL dissociates from gH leading to activation of the viral fusion glycoproteins gB and gH. In Saimiriine herpesvirus 2 (strain 11) (SaHV-2), this protein is Envelope glycoprotein L.